We begin with the raw amino-acid sequence, 137 residues long: Large ribosomal subunit protein uL16 (137 aa).

A compositionally biased stretch (basic residues) spans 1–17 (MLSPKRVKFRKRQRGRL). Residues 1–24 (MLSPKRVKFRKRQRGRLKGTDERG) are disordered.

It belongs to the universal ribosomal protein uL16 family. In terms of assembly, part of the 50S ribosomal subunit.

Functionally, binds 23S rRNA and is also seen to make contacts with the A and possibly P site tRNAs. This chain is Large ribosomal subunit protein uL16, found in Leptospira borgpetersenii serovar Hardjo-bovis (strain JB197).